We begin with the raw amino-acid sequence, 306 residues long: 2-dehydro-3-deoxy-D-gluconate/2-dehydro-3-deoxy-phosphogluconate aldolase (306 aa).

Residues 61-62 (TT), 148-150 (YNY), and 173-175 (KDT) contribute to the substrate site. Lys173 acts as the Schiff-base intermediate with substrate in catalysis.

The protein belongs to the DapA family. KDPG aldolase subfamily. In terms of assembly, homotetramer; dimer of dimers.

It catalyses the reaction 2-dehydro-3-deoxy-6-phospho-D-gluconate = D-glyceraldehyde 3-phosphate + pyruvate. It carries out the reaction 2-dehydro-3-deoxy-D-gluconate = D-glyceraldehyde + pyruvate. It participates in carbohydrate acid metabolism; 2-dehydro-3-deoxy-D-gluconate degradation; D-glyceraldehyde 3-phosphate and pyruvate from 2-dehydro-3-deoxy-D-gluconate: step 2/2. Functionally, involved in the degradation of glucose via the Entner-Doudoroff pathway. Catalyzes the reversible cleavage of 2-keto-3-deoxy-6-phosphogluconate (KDPG) and 2-keto-3-deoxygluconate (KDG) forming pyruvate and glyceraldehyde 3-phosphate or glyceraldehyde, respectively. It is not able to use 2-keto-3-deoxy-6-phosphogalactonate (KDPGal) and 2-keto-3-deoxygalactonate (KDGal) as substrate. The sequence is that of 2-dehydro-3-deoxy-D-gluconate/2-dehydro-3-deoxy-phosphogluconate aldolase (kdgA) from Thermoproteus tenax.